The primary structure comprises 20 residues: Cytochrome c oxidase subunit 6A1, mitochondrial (20 aa).

Belongs to the cytochrome c oxidase subunit 6A family. Component of the cytochrome c oxidase (complex IV, CIV), a multisubunit enzyme composed of 14 subunits. The complex is composed of a catalytic core of 3 subunits MT-CO1, MT-CO2 and MT-CO3, encoded in the mitochondrial DNA, and 11 supernumerary subunits COX4I, COX5A, COX5B, COX6A, COX6B, COX6C, COX7A, COX7B, COX7C, COX8 and NDUFA4, which are encoded in the nuclear genome. The complex exists as a monomer or a dimer and forms supercomplexes (SCs) in the inner mitochondrial membrane with NADH-ubiquinone oxidoreductase (complex I, CI) and ubiquinol-cytochrome c oxidoreductase (cytochrome b-c1 complex, complex III, CIII), resulting in different assemblies (supercomplex SCI(1)III(2)IV(1) and megacomplex MCI(2)III(2)IV(2)). As to expression, liver specific isoform.

The protein localises to the mitochondrion inner membrane. Its pathway is energy metabolism; oxidative phosphorylation. Component of the cytochrome c oxidase, the last enzyme in the mitochondrial electron transport chain which drives oxidative phosphorylation. The respiratory chain contains 3 multisubunit complexes succinate dehydrogenase (complex II, CII), ubiquinol-cytochrome c oxidoreductase (cytochrome b-c1 complex, complex III, CIII) and cytochrome c oxidase (complex IV, CIV), that cooperate to transfer electrons derived from NADH and succinate to molecular oxygen, creating an electrochemical gradient over the inner membrane that drives transmembrane transport and the ATP synthase. Cytochrome c oxidase is the component of the respiratory chain that catalyzes the reduction of oxygen to water. Electrons originating from reduced cytochrome c in the intermembrane space (IMS) are transferred via the dinuclear copper A center (CU(A)) of subunit 2 and heme A of subunit 1 to the active site in subunit 1, a binuclear center (BNC) formed by heme A3 and copper B (CU(B)). The BNC reduces molecular oxygen to 2 water molecules unsing 4 electrons from cytochrome c in the IMS and 4 protons from the mitochondrial matrix. This is Cytochrome c oxidase subunit 6A1, mitochondrial (COX6A1) from Canis lupus familiaris (Dog).